The primary structure comprises 403 residues: Exodeoxyribonuclease 7 large subunit (403 aa).

The protein belongs to the XseA family. Heterooligomer composed of large and small subunits.

It localises to the cytoplasm. It carries out the reaction Exonucleolytic cleavage in either 5'- to 3'- or 3'- to 5'-direction to yield nucleoside 5'-phosphates.. Its function is as follows. Bidirectionally degrades single-stranded DNA into large acid-insoluble oligonucleotides, which are then degraded further into small acid-soluble oligonucleotides. This chain is Exodeoxyribonuclease 7 large subunit, found in Streptomyces griseus subsp. griseus (strain JCM 4626 / CBS 651.72 / NBRC 13350 / KCC S-0626 / ISP 5235).